The sequence spans 1262 residues: Synaptopodin-2 (1262 aa).

Residues 1-174 (MGTGDFICIS…PGSQEGHLVE (174 aa)) form an interaction with VPS18 region. In terms of domain architecture, PDZ spans 6–88 (FICISMTGGA…SLHLLIKRPT (83 aa)). 2 stretches are compositionally biased toward polar residues: residues 89–105 (SGTS…TNHQ) and 246–260 (TSLT…SSGR). Disordered stretches follow at residues 89 to 114 (SGTS…GPME) and 239 to 276 (PAPE…TGLP). Phosphoserine is present on residues Ser304, Ser323, and Ser324. The disordered stretch occupies residues 323–363 (SSEGTEQGEDQRSGKDQGRPHKHRARHARLRRSESLSEKQV). The residue at position 327 (Thr327) is a Phosphothreonine. Residues 331–341 (EDQRSGKDQGR) show a composition bias toward basic and acidic residues. Positions 342-352 (PHKHRARHARL) are enriched in basic residues. A compositionally biased stretch (basic and acidic residues) spans 353-363 (RRSESLSEKQV). The Nuclear localization signal motif lies at 392–400 (KKRRRRARK). Interaction with ACTN2 regions lie at residues 477 to 658 (MEML…FYDS), 659 to 922 (SEQI…PPVA), and 899 to 1153 (QSPT…NIEE). Disordered stretches follow at residues 503-576 (AQNE…GPQR) and 592-703 (NQTA…SPNP). Residues Ser518, Ser543, Ser544, Ser546, and Ser549 each carry the phosphoserine modification. F-actin binding stretches follow at residues 530–658 (TSYQ…FYDS) and 659–801 (SEQI…VTAV). Residues 540–552 (RMQSSVSESSFQM) are compositionally biased toward low complexity. The tract at residues 554 to 560 (RSLGSVP) is interaction with YWHAB. Ser558 carries the post-translational modification Phosphoserine; by PKA. Composition is skewed to polar residues over residues 558–569 (SVPQQNGFSGVS) and 592–606 (NQTA…SVTS). The residue at position 599 (Ser599) is a Phosphoserine. Residues 602-809 (QSVTSPIPDF…AVSSIKIAQP (208 aa)) are interaction with YWHAB. Thr605 bears the Phosphothreonine; by PKA and CaMK2 mark. Ser606 is modified (phosphoserine). 2 stretches are compositionally biased toward pro residues: residues 609–625 (PDFP…PPPE) and 639–650 (AQPPPWPQPAPW). The interaction with BAG3 stretch occupies residues 610–621 (DFPAPPPYSAVS). The PPPY motif signature appears at 614–617 (PPPY). Phosphotyrosine is present on Tyr617. A Phosphoserine modification is found at Ser621. Residues 659 to 914 (SEQIASRDER…LPASWKYSSN (256 aa)) form an F-actin bundling activity region. Ser700 and Ser724 each carry phosphoserine. Disordered regions lie at residues 741–799 (MQSS…PQVT) and 833–868 (VVSH…GMSG). The segment at 745 to 898 (AKQKTPPPVA…DTVQAHTVRA (154 aa)) is actin binding. Thr749 carries the phosphothreonine modification. The span at 756 to 782 (KPAVKTSSSSQPVAPVSPVWSPGVAPA) shows a compositional bias: low complexity. Residues Ser772 and Ser776 each carry the phosphoserine modification. Positions 786-799 (AFSTTNPPNPPQVT) are enriched in polar residues. Residues 808 to 1153 (QPTCPPARPA…EAFRPRNIEE (346 aa)) form an interaction with FLNC region. Phosphoserine occurs at positions 900, 904, and 908. The segment at 933–957 (LAAIKSQPPGAQASKTSKKKGKKPL) is disordered. The interval 999-1018 (PAMKQALPPRQADIGSPTNA) is interaction with ZYX. Phosphoserine occurs at positions 1014, 1055, and 1090.

Belongs to the synaptopodin family. May self-associate in muscle cells under oxidative stress. Binds F-actin. Interacts with ACTN2; ACTN2 is proposed to anchor SYOP2 at Z lines in mature myocytes. Interacts with AKAP6, PPP3CA and CAMK2A. Interacts (phosphorylated form) with YWHAB; YWHAB competes with ACTN2 for interaction with SYNPO2. Interacts with KPNA2; mediating nuclear import of SYNOP2; dependent on interaction with YWHAB. Interacts with IPO13; may be implicated in SYNOP2 nuclear import. Interacts with ZYX, FLNC, ILK. Interacts with BAG3 (via WW 1 domain). May associate with the CASA complex consisting of HSPA8, HSPB8 and BAG3. Interacts with VPS18. Post-translationally, phosphorylated by PKA, and by CaMK2 at multiple sites. Dephosphorylated by calcineurin at Ser-558 and Thr-605; abrogating interaction with YWHAB and impairing nuclear import.

It is found in the nucleus. The protein localises to the cytoplasm. The protein resides in the cytoskeleton. Its subcellular location is the myofibril. It localises to the sarcomere. It is found in the z line. The protein localises to the cell junction. The protein resides in the focal adhesion. Has an actin-binding and actin-bundling activity. Can induce the formation of F-actin networks. At the sarcomeric Z lines is proposed to act as adapter protein that links nascent myofibers to the sarcolemma via ZYX and may play a role in early assembly and stabilization of the Z lines. Involved in autophagosome formation. May play a role in chaperone-assisted selective autophagy (CASA) involved in Z lines maintenance in striated muscle under mechanical tension; may link the client-processing CASA chaperone machinery to a membrane-tethering and fusion complex providing autophagosome membranes. Involved in regulation of cell migration. May be a tumor suppressor. The polypeptide is Synaptopodin-2 (Synpo2) (Rattus norvegicus (Rat)).